We begin with the raw amino-acid sequence, 432 residues long: Glyceraldehyde-3-phosphate dehydrogenase, testis-specific (432 aa).

The tract at residues 1–97 is testis-specific N-terminal extension; that stretch reads MSRRDVVLTN…PPPPPPPKPA (97 aa). Residues 40–101 form a disordered region; that stretch reads PPPPKVEEPP…PPPKPAKELT (62 aa). Basic and acidic residues predominate over residues 44–55; the sequence is KVEEPPPPKEEP. 2 stretches are compositionally biased toward pro residues: residues 56–67 and 75–95; these read PPPPPPPPPPQI and APPPPPPPPPPPPPPPPPPPK. NAD(+) is bound by residues 109 to 110, D130, K175, Y197, and T217; that span reads RI. D-glyceraldehyde 3-phosphate contacts are provided by residues 247–249, T278, 307–308, and R330; these read SCT and TG. C248 serves as the catalytic Nucleophile. Position 350 is a phosphoserine (S350). N412 serves as a coordination point for NAD(+).

Belongs to the glyceraldehyde-3-phosphate dehydrogenase family. Homotetramer. In terms of tissue distribution, expressed in both head and flagellum of epididymal sperm.

The protein localises to the cytoplasm. It carries out the reaction D-glyceraldehyde 3-phosphate + phosphate + NAD(+) = (2R)-3-phospho-glyceroyl phosphate + NADH + H(+). It participates in carbohydrate degradation; glycolysis; pyruvate from D-glyceraldehyde 3-phosphate: step 1/5. Its function is as follows. May play an important role in regulating the switch between different pathways for energy production during spermiogenesis and in the spermatozoon. Required for sperm motility and male fertility. The polypeptide is Glyceraldehyde-3-phosphate dehydrogenase, testis-specific (Gapdhs) (Rattus norvegicus (Rat)).